Consider the following 207-residue polypeptide: Large ribosomal subunit protein uL4 (207 aa).

A disordered region spans residues 62-85; it reads KKPFKQKGTGQARQGCRRAPQYPG.

It belongs to the universal ribosomal protein uL4 family. As to quaternary structure, part of the 50S ribosomal subunit.

Its function is as follows. One of the primary rRNA binding proteins, this protein initially binds near the 5'-end of the 23S rRNA. It is important during the early stages of 50S assembly. It makes multiple contacts with different domains of the 23S rRNA in the assembled 50S subunit and ribosome. Functionally, forms part of the polypeptide exit tunnel. The protein is Large ribosomal subunit protein uL4 of Geobacter sp. (strain M21).